Reading from the N-terminus, the 141-residue chain is MNKPKQILRLRKRAEFLALRNGEKRRGPLFLLEVRERTEEESQTAKIGEKPRAGFTVTKKNGNAVIRNRIRRRLREAVRCHAGRDMAPSTDYVIVAREQALTAPFSRLTEELSRRIKAKGERRGDGKRRTERPESGPVNGK.

The segment covering 114–134 (RRIKAKGERRGDGKRRTERPE) has biased composition (basic and acidic residues). Positions 114–141 (RRIKAKGERRGDGKRRTERPESGPVNGK) are disordered.

It belongs to the RnpA family. Consists of a catalytic RNA component (M1 or rnpB) and a protein subunit.

The catalysed reaction is Endonucleolytic cleavage of RNA, removing 5'-extranucleotides from tRNA precursor.. Its function is as follows. RNaseP catalyzes the removal of the 5'-leader sequence from pre-tRNA to produce the mature 5'-terminus. It can also cleave other RNA substrates such as 4.5S RNA. The protein component plays an auxiliary but essential role in vivo by binding to the 5'-leader sequence and broadening the substrate specificity of the ribozyme. In Brucella anthropi (strain ATCC 49188 / DSM 6882 / CCUG 24695 / JCM 21032 / LMG 3331 / NBRC 15819 / NCTC 12168 / Alc 37) (Ochrobactrum anthropi), this protein is Ribonuclease P protein component.